The chain runs to 336 residues: Small ribosomal subunit protein uS9m (336 aa).

The disordered stretch occupies residues 32–81 (STTTTTTTTTTTTTSDEIPTTKPRFQSRFRRNQQPHQQQRSPYTSSQVTE). The span at 33–45 (TTTTTTTTTTTTT) shows a compositional bias: low complexity. Over residues 65–81 (QPHQQQRSPYTSSQVTE) the composition is skewed to polar residues.

It belongs to the universal ribosomal protein uS9 family. In terms of assembly, component of the mitochondrial small ribosomal subunit (mt-SSU).

The protein resides in the mitochondrion. Its function is as follows. Component of the mitochondrial ribosome (mitoribosome), a dedicated translation machinery responsible for the synthesis of mitochondrial genome-encoded proteins, including at least some of the essential transmembrane subunits of the mitochondrial respiratory chain. The mitoribosomes are attached to the mitochondrial inner membrane and translation products are cotranslationally integrated into the membrane. The protein is Small ribosomal subunit protein uS9m (MRPS9) of Candida albicans (strain SC5314 / ATCC MYA-2876) (Yeast).